Here is a 239-residue protein sequence, read N- to C-terminus: Ribosomal RNA small subunit methyltransferase G (239 aa).

S-adenosyl-L-methionine contacts are provided by residues G77, F82, A128–E129, and R146. The disordered stretch occupies residues D215–K239.

This sequence belongs to the methyltransferase superfamily. RNA methyltransferase RsmG family.

It is found in the cytoplasm. Specifically methylates the N7 position of guanine in position 535 of 16S rRNA. The sequence is that of Ribosomal RNA small subunit methyltransferase G from Staphylococcus aureus (strain USA300).